A 153-amino-acid polypeptide reads, in one-letter code: Ribonuclease H (153 aa).

The RNase H type-1 domain maps to 1–142 (MTDQIEIFTD…ADELARRGVD (142 aa)). 4 residues coordinate Mg(2+): aspartate 10, glutamate 48, aspartate 70, and aspartate 134.

The protein belongs to the RNase H family. As to quaternary structure, monomer. It depends on Mg(2+) as a cofactor.

The protein localises to the cytoplasm. It catalyses the reaction Endonucleolytic cleavage to 5'-phosphomonoester.. Its function is as follows. Endonuclease that specifically degrades the RNA of RNA-DNA hybrids. The protein is Ribonuclease H of Aromatoleum aromaticum (strain DSM 19018 / LMG 30748 / EbN1) (Azoarcus sp. (strain EbN1)).